A 98-amino-acid polypeptide reads, in one-letter code: Large ribosomal subunit protein uL23 (98 aa).

Belongs to the universal ribosomal protein uL23 family. In terms of assembly, part of the 50S ribosomal subunit. Contacts protein L29, and trigger factor when it is bound to the ribosome.

Functionally, one of the early assembly proteins it binds 23S rRNA. One of the proteins that surrounds the polypeptide exit tunnel on the outside of the ribosome. Forms the main docking site for trigger factor binding to the ribosome. In Methylorubrum populi (strain ATCC BAA-705 / NCIMB 13946 / BJ001) (Methylobacterium populi), this protein is Large ribosomal subunit protein uL23.